A 108-amino-acid polypeptide reads, in one-letter code: Ig kappa chain V-V region EPC 109 (108 aa).

The framework-1 stretch occupies residues Asp1–Cys23. A disulfide bridge connects residues Cys23 and Cys88. The complementarity-determining-1 stretch occupies residues Gln24–Asn34. A framework-2 region spans residues Trp35–Tyr49. The interval Gly50–Ala56 is complementarity-determining-2. The framework-3 stretch occupies residues Gly57 to Cys88. Residues Leu89–Thr97 are complementarity-determining-3. A framework-4 region spans residues Phe98–Arg108.

This is Ig kappa chain V-V region EPC 109 from Mus musculus (Mouse).